The chain runs to 246 residues: MPCLKITLAYDGSNYAGWQVQPEAHGPTVQGEVAAALKRLTGEEITPVAAGRTDAGVHARGQVISFSTRARIPVERWPLALNSVLPADIAALEAVEVAPDFHARYCAKRKWYRYTIYNNRVPDVFCRRYSWHLRQPLDVIAMARAAAYLQGCHDFRSFCAAGSPVRHFERQVQQASVSQNGPFIYFDVIADGFLYHMVRIMVGTLVEIGRRRLVPEAIPAILAARSREKAGPTAPARGLCLERVEY.

D54 acts as the Nucleophile in catalysis. Y112 contacts substrate.

Belongs to the tRNA pseudouridine synthase TruA family. As to quaternary structure, homodimer.

It catalyses the reaction uridine(38/39/40) in tRNA = pseudouridine(38/39/40) in tRNA. Its function is as follows. Formation of pseudouridine at positions 38, 39 and 40 in the anticodon stem and loop of transfer RNAs. The chain is tRNA pseudouridine synthase A from Moorella thermoacetica (strain ATCC 39073 / JCM 9320).